We begin with the raw amino-acid sequence, 554 residues long: Acurin A biosynthesis cluster MFS-type transporter (554 aa).

Helical transmembrane passes span 24–44 (WLIFLAIGIATFVAALDTSII), 60–80 (LYIWIINTYLLSSTVSSAIVG), 96–116 (LLIFAVGSAISGAARDTGMLL), 123–143 (GLGGGSITTLSEVLVCDMVSL), and 151–171 (GILGAAWTLAAVVGPIMGGGF). The N-linked (GlcNAc...) asparagine glycan is linked to Asn174. Helical transmembrane passes span 179–199 (WIFYINLPIAGSSLFLIVTLL), 219–239 (WGGITLLTLGVTAILLSLTWA), and 251–271 (IVPLILGFLGLLGFIAYEALP). An N-linked (GlcNAc...) asparagine glycan is attached at Asn283. 6 helical membrane-spanning segments follow: residues 289 to 309 (LFVMAFIYSLLLFWVCYFLPI), 324 to 344 (VMLFPVATTTAPAGIVAGILM), 352 to 372 (SFQYIGFALMTIACGLFTLLD), 385 to 405 (ILFGVGTGIVFTTGLPPILAS), 417 to 437 (TWIFMRNFGAIWGTAIPAAVF), and 496 to 516 (VWQVSIAFCGVGFLLCFLVKA).

This sequence belongs to the major facilitator superfamily.

The protein localises to the membrane. MFS-type transporter that may have a role in the biosynthesis of acurin A, a highly reduced polyketide coupled to a serine via a peptide bond; either in extra- or intracellular transport. The polypeptide is Acurin A biosynthesis cluster MFS-type transporter (Aspergillus aculeatus (strain ATCC 16872 / CBS 172.66 / WB 5094)).